We begin with the raw amino-acid sequence, 112 residues long: MPQIVILPHADHCPEGAVFEAKPGETILDAALRNGIEIEHACEKSCACTTCHVIVREGLDSMEPSDELEDDMLDKAWGLEPDSRLSCQAVVADEDLVVEIPKYTINQVSEGH.

A 2Fe-2S ferredoxin-type domain is found at 1-104 (MPQIVILPHA…DLVVEIPKYT (104 aa)). 4 residues coordinate [2Fe-2S] cluster: C42, C48, C51, and C87.

The protein belongs to the adrenodoxin/putidaredoxin family. Requires [2Fe-2S] cluster as cofactor.

In terms of biological role, ferredoxin are iron-sulfur proteins that transfer electrons in a wide variety of metabolic reactions. The polypeptide is 2Fe-2S ferredoxin (fdx) (Pseudomonas aeruginosa (strain ATCC 15692 / DSM 22644 / CIP 104116 / JCM 14847 / LMG 12228 / 1C / PRS 101 / PAO1)).